We begin with the raw amino-acid sequence, 181 residues long: MARMKDKYLALKAELQADLGIKNPMQTPALEKIVISVGAGFAMKDNKLIQNIEDTITTIAGQKASTVIAKKSVAGFKVREGMPVGVRVTLRGEKMYNFFDRLVSMALPRVKDFRGVPRNGFDGRGNYNFGLQEQLIFPEVSYDSVMQIHGMNITVVTSAESDKAGFALLEKMGMPFSKGSN.

This sequence belongs to the universal ribosomal protein uL5 family. As to quaternary structure, part of the 50S ribosomal subunit; part of the 5S rRNA/L5/L18/L25 subcomplex. Contacts the 5S rRNA and the P site tRNA. Forms a bridge to the 30S subunit in the 70S ribosome.

This is one of the proteins that bind and probably mediate the attachment of the 5S RNA into the large ribosomal subunit, where it forms part of the central protuberance. In the 70S ribosome it contacts protein S13 of the 30S subunit (bridge B1b), connecting the 2 subunits; this bridge is implicated in subunit movement. Contacts the P site tRNA; the 5S rRNA and some of its associated proteins might help stabilize positioning of ribosome-bound tRNAs. The protein is Large ribosomal subunit protein uL5 of Sulfurimonas denitrificans (strain ATCC 33889 / DSM 1251) (Thiomicrospira denitrificans (strain ATCC 33889 / DSM 1251)).